The primary structure comprises 302 residues: MTHTEVVCAVVVTHRRRELLATSLDAVVSQDRKPDHLIVVDNDNDPQVRELVTGQPVPSTYLGSRRNLGGAGGFALGMLHALALGADWIWLADDDGRPADTTVLSTLLSCAHTHSLAEVSPMVCNLDDPQRLAFPLRRGLVWRRLTSELRTDSSSSSGDLLPGIASLFNGALFRADTVDAVGVPDLRLFVRGDEVELHRRLVRSGLPFGTCLTASYLHPCGTDEFKPILGGRMHTQYPDDETKRFFTYRNRGYLLSQPGLRKLLPQEWLRFGWYFLVSRRDLAGLREWIRLRRLGRRERFQR.

It belongs to the glycosyltransferase 2 family.

It is found in the cell membrane. Its subcellular location is the secreted. The protein localises to the cell wall. It carries out the reaction alpha-L-rhamnosyl-(1-&gt;3)-N-acetyl-alpha-D-glucosaminyl-diphospho-trans,octa-cis-decaprenol + 2 UDP-alpha-D-galactofuranose = beta-D-galactofuranosyl-(1-&gt;5)-beta-D-galactofuranosyl-(1-&gt;4)-alpha-L-rhamnosyl-(1-&gt;3)-N-acetyl-alpha-D-glucosaminyl-diphospho-trans,octa-cis-decaprenol + 2 UDP + 2 H(+). Its pathway is cell wall biogenesis; cell wall polysaccharide biosynthesis. Involved in the biosynthesis of the arabinogalactan (AG) region of the mycolylarabinogalactan-peptidoglycan (mAGP) complex, an essential component of the mycobacterial cell wall. Catalyzes the transfer of the first two galactofuranosyl (Galf) units from UDP-galactofuranose (UDP-Galf) onto the rhamnosyl-GlcNAc-diphospho-decaprenol (Rha-GlcNAc-PP-C50) acceptor, yielding galactofuranosyl-galactofuranosyl-rhamnosyl-GlcNAc-diphospho-decaprenol (Galf-Galf-Rha-GlcNAc-PP-C50). Thus, GlfT1 is the initiator of galactan synthesis, while GlfT2 continues with the subsequent polymerization events. This Mycolicibacterium smegmatis (strain ATCC 700084 / mc(2)155) (Mycobacterium smegmatis) protein is Galactofuranosyltransferase GlfT1.